Reading from the N-terminus, the 284-residue chain is ELMO domain-containing protein B (284 aa).

The region spanning 124 to 276 (EHEASLERLW…EFETKISQNS (153 aa)) is the ELMO domain.

The chain is ELMO domain-containing protein B (elmoB) from Dictyostelium discoideum (Social amoeba).